Reading from the N-terminus, the 443-residue chain is MHILVVSVNYRTAPVEFREKLTFQAAELEQAMNTLQNQKSVLENVIVSTCNRTEIYAVVDQLHTGRYYIKKFLADWFQLEIEEVAPYLSIFEQDGAIDHLFRVTCGLDSMVVGETQILGQIKDSFLEAQQVKATGTIFNELFKQVVTLAKRAHSETTIGESAMSVSYAAVELGKKIFGDLTDCHVLILGAGKMGELALQNLYGSGARKVTVMNRTLTKAEVMAEKYMGHAKPLSELQCALLEADILISSTGASEYVITKEMMTKVERMRSGRPLFMVDIAVPRDIDPAIDELEGSFLYDIDDLQGVVEANRAERLKEAEKIQFMIEEEMVLFKTWLSTLGVVPLISALRDKALAIQSDTMESLERKIPNLSDREKKVISKHTKSIINQLLKDPILVAKELAVEEGAGEKLALFAKIFDLEVEEAGNTEEVEHKRAWTPSVPSL.

Substrate-binding positions include 49 to 52 (TCNR), Ser109, 114 to 116 (ETQ), and Gln120. The active-site Nucleophile is Cys50. Residue 189-194 (GAGKMG) coordinates NADP(+).

It belongs to the glutamyl-tRNA reductase family. As to quaternary structure, homodimer.

It carries out the reaction (S)-4-amino-5-oxopentanoate + tRNA(Glu) + NADP(+) = L-glutamyl-tRNA(Glu) + NADPH + H(+). Its pathway is porphyrin-containing compound metabolism; protoporphyrin-IX biosynthesis; 5-aminolevulinate from L-glutamyl-tRNA(Glu): step 1/2. Functionally, catalyzes the NADPH-dependent reduction of glutamyl-tRNA(Glu) to glutamate 1-semialdehyde (GSA). The sequence is that of Glutamyl-tRNA reductase from Bacillus mycoides (strain KBAB4) (Bacillus weihenstephanensis).